Consider the following 180-residue polypeptide: MSIDSLKDKLPDFAKDVRLNLSNIANDDTLGEQTKYGLMLACAVATRNAEVLKAFDQECTPHLAPAARDAALAAATIMAMNNVYYRFVHLASNKAYGTLPAKLRMNIIGNPGVPKTDFELWSLAVSAINGCGMCIDSHEKVLLNADTTQDTIQTAVRFAAIIQSTAVALEAASLPVSAAS.

C131 (proton donor) is an active-site residue. A disulfide bond links C131 and C134. Catalysis depends on C134, which acts as the Cysteine sulfenic acid (-SOH) intermediate.

Belongs to the AhpD family.

It carries out the reaction N(6)-[(R)-dihydrolipoyl]-L-lysyl-[lipoyl-carrier protein] + a hydroperoxide = N(6)-[(R)-lipoyl]-L-lysyl-[lipoyl-carrier protein] + an alcohol + H2O. In terms of biological role, antioxidant protein with alkyl hydroperoxidase activity. Required for the reduction of the AhpC active site cysteine residues and for the regeneration of the AhpC enzyme activity. This is Alkyl hydroperoxide reductase AhpD from Beijerinckia indica subsp. indica (strain ATCC 9039 / DSM 1715 / NCIMB 8712).